A 121-amino-acid chain; its full sequence is Small ribosomal subunit protein uS13 (121 aa).

Residues 94-121 (GLPVRGQRTRTNARTRKGKRKTVAGKKK) are disordered.

Belongs to the universal ribosomal protein uS13 family. In terms of assembly, part of the 30S ribosomal subunit. Forms a loose heterodimer with protein S19. Forms two bridges to the 50S subunit in the 70S ribosome.

Functionally, located at the top of the head of the 30S subunit, it contacts several helices of the 16S rRNA. In the 70S ribosome it contacts the 23S rRNA (bridge B1a) and protein L5 of the 50S subunit (bridge B1b), connecting the 2 subunits; these bridges are implicated in subunit movement. Contacts the tRNAs in the A and P-sites. This Treponema pallidum (strain Nichols) protein is Small ribosomal subunit protein uS13.